The sequence spans 467 residues: Repressible acid phosphatase (467 aa).

The N-terminal stretch at 1 to 17 (MFKSVVYSILAASLANA) is a signal peptide. The active-site Nucleophile is His-75. N-linked (GlcNAc...) asparagine glycans are attached at residues Asn-97, Asn-103, Asn-162, Asn-192, Asn-250, and Asn-315. Asp-338 (proton donor) is an active-site residue. Residues Asn-356, Asn-390, Asn-439, Asn-445, Asn-456, and Asn-461 are each glycosylated (N-linked (GlcNAc...) asparagine).

It belongs to the histidine acid phosphatase family. In terms of processing, glycosylated during secretion across the membrane.

The protein localises to the secreted. It carries out the reaction a phosphate monoester + H2O = an alcohol + phosphate. Partially mediates extracellular nucleotide derived phosphate hydrolysis along with NPP1 and NPP2. This Saccharomyces cerevisiae (strain ATCC 204508 / S288c) (Baker's yeast) protein is Repressible acid phosphatase (PHO5).